A 319-amino-acid chain; its full sequence is MFARQTFRYAQPLKQSFRKYSTEAPKGKSLAPVYLTVGLAGLGVGLYRYNSATAEAPAERAKVFTGGDQGWVDLKLSEIEVLNHNTKRFRFEFEDKEAVSGLNVASALLTKFKPEGGKAVLRPYTPVSDESQPGFLDLVVKVYPNGPMSEHLHSMNVDQRLEFKGPLPKYPWEANKHQHICLIAGGTGITPMYQLARHIFKNPEDKTKVTLVYGNVSEQDILLKKELEELENTYPQRFKAFYVLDNPPKEWTGGKGYISKELLKTVLPEPKEENIKIFVCGPPGLYKAISGNKVSPKDQGELTGILKELGYSQEQVFKF.

A helical membrane pass occupies residues 30-46; the sequence is LAPVYLTVGLAGLGVGL. In terms of domain architecture, FAD-binding FR-type spans 69–173; the sequence is QGWVDLKLSE…KGPLPKYPWE (105 aa). 176–211 is an FAD binding site; sequence KHQHICLIAGGTGITPMYQLARHIFKNPEDKTKVTL.

Belongs to the flavoprotein pyridine nucleotide cytochrome reductase family. It depends on FAD as a cofactor.

The protein localises to the mitochondrion outer membrane. It carries out the reaction 2 Fe(III)-[cytochrome b5] + NADH = 2 Fe(II)-[cytochrome b5] + NAD(+) + H(+). Its function is as follows. May mediate the reduction of outer membrane cytochrome b5. In Aspergillus terreus (strain NIH 2624 / FGSC A1156), this protein is NADH-cytochrome b5 reductase 2 (mcr1).